A 243-amino-acid polypeptide reads, in one-letter code: Probable transcriptional regulatory protein LCA_1307 (243 aa).

The disordered stretch occupies residues 1 to 21 (MSGHSKWHNIQGRKNAQDAKR).

Belongs to the TACO1 family.

It is found in the cytoplasm. The protein is Probable transcriptional regulatory protein LCA_1307 of Latilactobacillus sakei subsp. sakei (strain 23K) (Lactobacillus sakei subsp. sakei).